Here is a 263-residue protein sequence, read N- to C-terminus: Protein YpjB (263 aa).

Residues 233–244 (DFDDSSSEDDPV) are compositionally biased toward acidic residues. A disordered region spans residues 233 to 263 (DFDDSSSEDDPVENSPVVTSPVVSSSKSSFQ). Low complexity predominate over residues 245–263 (ENSPVVTSPVVSSSKSSFQ).

This is Protein YpjB (ypjB) from Escherichia coli (strain K12).